A 359-amino-acid polypeptide reads, in one-letter code: Glutamate 5-kinase (359 aa).

Lys7 is an ATP binding site. 3 residues coordinate substrate: Ser47, Asp135, and Asn147. 202 to 208 lines the ATP pocket; that stretch reads SGGITSK. In terms of domain architecture, PUA spans 266-343; sequence KGSIFINEGA…DQLEDVLGYS (78 aa).

This sequence belongs to the glutamate 5-kinase family.

It localises to the cytoplasm. It carries out the reaction L-glutamate + ATP = L-glutamyl 5-phosphate + ADP. It functions in the pathway amino-acid biosynthesis; L-proline biosynthesis; L-glutamate 5-semialdehyde from L-glutamate: step 1/2. Catalyzes the transfer of a phosphate group to glutamate to form L-glutamate 5-phosphate. This Kosmotoga olearia (strain ATCC BAA-1733 / DSM 21960 / TBF 19.5.1) protein is Glutamate 5-kinase.